A 253-amino-acid chain; its full sequence is RNA polymerase sigma factor SigI6 (253 aa).

Residues 63–76 (EEYSVALLAFNEAI) carry the Polymerase core binding motif. The H-T-H motif DNA-binding region spans 203-222 (TLELLKLAKVSRRTIERNKK).

This sequence belongs to the sigma-70 factor family. SigI subfamily. Interacts with RsgI6.

It is found in the cytoplasm. Its activity is regulated as follows. Negatively regulated by the anti-sigma-I factor RsgI6. Binding of the polysaccharide substrate to RsgI6 may lead to the release and activation of SigI6. Functionally, sigma factors are initiation factors that promote the attachment of RNA polymerase to specific initiation sites and are then released. This sigma factor is involved in regulation of cellulosomal genes via an external polysaccharide-sensing mechanism. Recognizes the predicted promoters associated with sigI6 itself, xyn11B, xyn10D, xyn10Z, xyn10Y, cel9V, cseP, sigI1, cipA, and rsgI5. This chain is RNA polymerase sigma factor SigI6, found in Acetivibrio thermocellus (strain ATCC 27405 / DSM 1237 / JCM 9322 / NBRC 103400 / NCIMB 10682 / NRRL B-4536 / VPI 7372) (Clostridium thermocellum).